We begin with the raw amino-acid sequence, 151 residues long: Putative calcium-binding protein CML23 (151 aa).

EF-hand domains lie at 2–37, 39–74, 84–119, and 120–151; these read VASD…SLGE, MPDE…MEAD, ETCR…LGTH, and LDVA…MMMA. Ca(2+) is bound by residues aspartate 15, aspartate 17, aspartate 19, lysine 21, glutamate 26, aspartate 52, aspartate 54, aspartate 56, and glutamate 63. Ca(2+) is bound by residues aspartate 133, asparagine 135, aspartate 137, and glutamate 144.

In terms of biological role, potential calcium sensor. This chain is Putative calcium-binding protein CML23 (CML23), found in Oryza sativa subsp. japonica (Rice).